The primary structure comprises 125 residues: MPSLNQLIRHGREEKRRTDRTRALDQCPQKQGVCPRVSTRTPKKPNSAPRKIAKVRLSNRHDIFAHIPGEGHNLQEHSMVLIRGGRVKDSPGVKSHCIRGVKDLLGIPDRRRGRSKYGAEKPKSI.

The interval 1-50 (MPSLNQLIRHGREEKRRTDRTRALDQCPQKQGVCPRVSTRTPKKPNSAPR) is disordered. Positions 10–23 (HGREEKRRTDRTRA) are enriched in basic and acidic residues.

It belongs to the universal ribosomal protein uS12 family.

The protein resides in the mitochondrion. In terms of biological role, protein S12 is involved in the translation initiation step. This Petunia hybrida (Petunia) protein is Small ribosomal subunit protein uS12m (RPS12).